The primary structure comprises 178 residues: Large ribosomal subunit protein bL25 (178 aa).

The protein belongs to the bacterial ribosomal protein bL25 family. CTC subfamily. As to quaternary structure, part of the 50S ribosomal subunit; part of the 5S rRNA/L5/L18/L25 subcomplex. Contacts the 5S rRNA. Binds to the 5S rRNA independently of L5 and L18.

Functionally, this is one of the proteins that binds to the 5S RNA in the ribosome where it forms part of the central protuberance. This chain is Large ribosomal subunit protein bL25, found in Campylobacter jejuni subsp. jejuni serotype O:23/36 (strain 81-176).